The primary structure comprises 107 residues: Putative double-stranded DNA mimic protein YpsIP31758_1954 (107 aa).

The protein belongs to the putative dsDNA mimic protein family.

Its function is as follows. May act as a double-stranded DNA (dsDNA) mimic. Probably regulates the activity of a dsDNA-binding protein. The polypeptide is Putative double-stranded DNA mimic protein YpsIP31758_1954 (Yersinia pseudotuberculosis serotype O:1b (strain IP 31758)).